The sequence spans 219 residues: Putative GEM-like protein 8 (219 aa).

In terms of domain architecture, GRAM spans 96–174 (KIYKRLFKVS…CKINGVNQSQ (79 aa)).

This sequence belongs to the GEM family.

This chain is Putative GEM-like protein 8, found in Arabidopsis thaliana (Mouse-ear cress).